The chain runs to 281 residues: Nucleotide-binding protein Daro_0070 (281 aa).

8-15 (GLSGSGKS) is an ATP binding site. Residue 57-60 (DARS) participates in GTP binding.

Belongs to the RapZ-like family.

In terms of biological role, displays ATPase and GTPase activities. This Dechloromonas aromatica (strain RCB) protein is Nucleotide-binding protein Daro_0070.